A 241-amino-acid chain; its full sequence is Uridylate kinase (241 aa).

15-18 provides a ligand contact to ATP; it reads KLSG. The interval 23–28 is involved in allosteric activation by GTP; sequence GSEGFG. Position 57 (glycine 57) interacts with UMP. Positions 58 and 62 each coordinate ATP. Residues aspartate 77 and 138–145 each bind UMP; that span reads TGNPFCTT. Residues threonine 165, tyrosine 171, and aspartate 174 each coordinate ATP.

This sequence belongs to the UMP kinase family. In terms of assembly, homohexamer.

The protein localises to the cytoplasm. It catalyses the reaction UMP + ATP = UDP + ADP. Its pathway is pyrimidine metabolism; CTP biosynthesis via de novo pathway; UDP from UMP (UMPK route): step 1/1. With respect to regulation, allosterically activated by GTP. Inhibited by UTP. Catalyzes the reversible phosphorylation of UMP to UDP. This chain is Uridylate kinase, found in Shewanella amazonensis (strain ATCC BAA-1098 / SB2B).